The sequence spans 434 residues: Eukaryotic translation initiation factor 3 subunit E (434 aa).

Residues 219-392 (FFNHPKGRDL…GHVVMGTQPL (174 aa)) enclose the PCI domain.

This sequence belongs to the eIF-3 subunit E family. In terms of assembly, component of the eukaryotic translation initiation factor 3 (eIF-3) complex. The eIF-3 complex interacts with pix. Interacts with mxt.

It localises to the cytoplasm. Functionally, component of the eukaryotic translation initiation factor 3 (eIF-3) complex, which is involved in protein synthesis of a specialized repertoire of mRNAs and, together with other initiation factors, stimulates binding of mRNA and methionyl-tRNAi to the 40S ribosome. The eIF-3 complex specifically targets and initiates translation of a subset of mRNAs involved in cell proliferation. This is Eukaryotic translation initiation factor 3 subunit E (eIF3-S6) from Drosophila persimilis (Fruit fly).